A 451-amino-acid chain; its full sequence is Bifunctional protein GlmU (451 aa).

Residues 1 to 225 form a pyrophosphorylase region; sequence MLEIIILAAG…EYEVLGVNNR (225 aa). UDP-N-acetyl-alpha-D-glucosamine contacts are provided by residues 7–10, Lys21, Gln72, 77–78, 99–101, Gly136, Glu150, Asn165, and Asn223; these read LAAG, GT, and YGD. Mg(2+) is bound at residue Asp101. Residue Asn223 participates in Mg(2+) binding. A linker region spans residues 226–246; that stretch reads LQQAELERIFQRQVAEELMVA. The segment at 247–451 is N-acetyltransferase; sequence GATLLDPARL…IKGWARPVKK (205 aa). Positions 329 and 347 each coordinate UDP-N-acetyl-alpha-D-glucosamine. Catalysis depends on His359, which acts as the Proton acceptor. UDP-N-acetyl-alpha-D-glucosamine is bound by residues Tyr362 and Asn373. Acetyl-CoA-binding positions include Ala376, 382–383, Ser401, Ala419, and Arg436; that span reads NY.

This sequence in the N-terminal section; belongs to the N-acetylglucosamine-1-phosphate uridyltransferase family. It in the C-terminal section; belongs to the transferase hexapeptide repeat family. In terms of assembly, homotrimer. Mg(2+) serves as cofactor.

It is found in the cytoplasm. It catalyses the reaction alpha-D-glucosamine 1-phosphate + acetyl-CoA = N-acetyl-alpha-D-glucosamine 1-phosphate + CoA + H(+). The enzyme catalyses N-acetyl-alpha-D-glucosamine 1-phosphate + UTP + H(+) = UDP-N-acetyl-alpha-D-glucosamine + diphosphate. It functions in the pathway nucleotide-sugar biosynthesis; UDP-N-acetyl-alpha-D-glucosamine biosynthesis; N-acetyl-alpha-D-glucosamine 1-phosphate from alpha-D-glucosamine 6-phosphate (route II): step 2/2. It participates in nucleotide-sugar biosynthesis; UDP-N-acetyl-alpha-D-glucosamine biosynthesis; UDP-N-acetyl-alpha-D-glucosamine from N-acetyl-alpha-D-glucosamine 1-phosphate: step 1/1. The protein operates within bacterial outer membrane biogenesis; LPS lipid A biosynthesis. In terms of biological role, catalyzes the last two sequential reactions in the de novo biosynthetic pathway for UDP-N-acetylglucosamine (UDP-GlcNAc). The C-terminal domain catalyzes the transfer of acetyl group from acetyl coenzyme A to glucosamine-1-phosphate (GlcN-1-P) to produce N-acetylglucosamine-1-phosphate (GlcNAc-1-P), which is converted into UDP-GlcNAc by the transfer of uridine 5-monophosphate (from uridine 5-triphosphate), a reaction catalyzed by the N-terminal domain. This chain is Bifunctional protein GlmU, found in Saccharophagus degradans (strain 2-40 / ATCC 43961 / DSM 17024).